A 165-amino-acid polypeptide reads, in one-letter code: Small ribosomal subunit protein eS10 (165 aa).

The residue at position 12 (tyrosine 12) is a Phosphotyrosine. The interval 90–165 (VPATLRRSRP…FGRGRGQPPQ (76 aa)) is disordered. Residues 97–128 (SRPETGRPRPKGPEGERPARFTRGEADRDTYR) are compositionally biased toward basic and acidic residues. Residues lysine 138 and lysine 139 each participate in a glycyl lysine isopeptide (Lys-Gly) (interchain with G-Cter in ubiquitin) cross-link. A Phosphoserine modification is found at serine 146. The residue at position 153 (arginine 153) is an Omega-N-methylarginine. The segment covering 154–165 (GGFGRGRGQPPQ) has biased composition (gly residues). Residues arginine 158 and arginine 160 each carry the symmetric dimethylarginine modification.

The protein belongs to the eukaryotic ribosomal protein eS10 family. Component of the small ribosomal subunit. The methylated form interacts with NPM1. Post-translationally, methylated by PRMT5. Methylation is necessary for its interaction with NPS1, its localization in the granular component (GC) region of the nucleolus, for the proper assembly of ribosomes, protein synthesis and optimal cell proliferation. Monoubiquitinated by ZNF598 when a ribosome has stalled during translation of poly(A) sequences, leading to preclude synthesis of a long poly-lysine tail and initiate the ribosome quality control (RQC) pathway to degrade the potentially detrimental aberrant nascent polypeptide. Deubiquitinated by OTUD3 and USP21, antagonizing ZNF598 activity. Deubiquitinated by OTUD1, antagonizing ZNF598 activity and stimulating formation of polysomes: deubiquitination by OTUD1 promotes stability and translation of a subset mRNAs with a high abundance of rare codons can limit the translation rate. Deubiquitinated by USP10.

The protein localises to the cytoplasm. The protein resides in the nucleus. It localises to the nucleolus. In terms of biological role, component of the 40S ribosomal subunit. The ribosome is a large ribonucleoprotein complex responsible for the synthesis of proteins in the cell. This is Small ribosomal subunit protein eS10 (Rps10) from Rattus norvegicus (Rat).